A 400-amino-acid chain; its full sequence is Putative cytochrome P450 133B2 (400 aa).

Cys-348 is a binding site for heme.

It belongs to the cytochrome P450 family. Heme serves as cofactor.

The sequence is that of Putative cytochrome P450 133B2 (cyp133B2) from Xylella fastidiosa (strain 9a5c).